We begin with the raw amino-acid sequence, 350 residues long: Arabinogalactan endo-beta-1,4-galactanase (350 aa).

Positions 1 to 16 (MFASLLLAALPLLTHA) are cleaved as a signal peptide. N128 carries N-linked (GlcNAc...) asparagine glycosylation. Residue E152 is the Proton donor of the active site. E262 functions as the Nucleophile in the catalytic mechanism.

Belongs to the glycosyl hydrolase 53 family. Post-translationally, glycosylated.

The catalysed reaction is The enzyme specifically hydrolyzes (1-&gt;4)-beta-D-galactosidic linkages in type I arabinogalactans.. The polypeptide is Arabinogalactan endo-beta-1,4-galactanase (gal1) (Aspergillus aculeatus).